A 486-amino-acid polypeptide reads, in one-letter code: Citrate synthase 3, mitochondrial (486 aa).

Residues 1 to 23 constitute a mitochondrion transit peptide; it reads MVQRLLPGAHICRRSFNSSAIIK. Active-site residues include His315, His361, and Asp419. The Microbody targeting signal motif lies at 484–486; that stretch reads NKL.

It belongs to the citrate synthase family.

Its subcellular location is the mitochondrion. The catalysed reaction is oxaloacetate + acetyl-CoA + H2O = citrate + CoA + H(+). Its pathway is carbohydrate metabolism; tricarboxylic acid cycle; isocitrate from oxaloacetate: step 1/2. Dual specificity mitochondrial citrate and methylcitrate synthase with similar catalytic efficiency with both acetyl-CoA and propionyl-CoA. The chain is Citrate synthase 3, mitochondrial from Saccharomyces cerevisiae (strain ATCC 204508 / S288c) (Baker's yeast).